Reading from the N-terminus, the 766-residue chain is 5-methyltetrahydropteroyltriglutamate--homocysteine methyltransferase (766 aa).

5-methyltetrahydropteroyltri-L-glutamate is bound by residues 16-19 and Lys124; that span reads RELK. L-homocysteine is bound by residues 445 to 447 and Glu498; that span reads IGS. Residues 445–447 and Glu498 each bind L-methionine; that span reads IGS. Residues 529–530 and Trp575 contribute to the 5-methyltetrahydropteroyltri-L-glutamate site; that span reads RC. Asp613 provides a ligand contact to L-homocysteine. L-methionine is bound at residue Asp613. Residue Glu619 participates in 5-methyltetrahydropteroyltri-L-glutamate binding. Residues His655, Cys657, and Glu679 each coordinate Zn(2+). The Proton donor role is filled by His708. Cys740 contacts Zn(2+).

Belongs to the vitamin-B12 independent methionine synthase family. Requires Zn(2+) as cofactor.

It catalyses the reaction 5-methyltetrahydropteroyltri-L-glutamate + L-homocysteine = tetrahydropteroyltri-L-glutamate + L-methionine. It participates in amino-acid biosynthesis; L-methionine biosynthesis via de novo pathway; L-methionine from L-homocysteine (MetE route): step 1/1. In terms of biological role, catalyzes the transfer of a methyl group from 5-methyltetrahydrofolate to homocysteine resulting in methionine formation. This Pseudomonas syringae pv. tomato (strain ATCC BAA-871 / DC3000) protein is 5-methyltetrahydropteroyltriglutamate--homocysteine methyltransferase.